We begin with the raw amino-acid sequence, 74 residues long: Tau-AnmTx Ueq 12-1 (74 aa).

The signal sequence occupies residues 1 to 18 (MCLLMLVLGAMYVQGWHS). Residues 19-27 (AGFGKRTLK) constitute a propeptide, removed in mature form. Disulfide bonds link C30-C37, C40-C71, C46-C64, C51-C72, and C58-C73.

The protein belongs to the Cnidaria small cysteine-rich protein (SCRiP) family. In terms of tissue distribution, detected in mucus secreted from ectoderm.

The protein localises to the secreted. Functionally, potentiates activation of mammalian TRPA1, a non-selective cation channel involved in perception of pain, in vitro yet has an analgesic and anti-inflammatory effect in vivo. Has antibacterial activity against C.glutamicum (MIC=50 uM) and, to a lesser extent, against S.aureus but not against P.aeruginosa or E.coli. This chain is Tau-AnmTx Ueq 12-1, found in Urticina eques (Sea anemone).